Here is a 186-residue protein sequence, read N- to C-terminus: ADP compounds hydrolase NudE (186 aa).

E40 contributes to the substrate binding site. The region spanning 45–172 is the Nudix hydrolase domain; that stretch reads TNREAVMIVP…DFNEARNVSA (128 aa). A Nudix box motif is present at residues 80–101; it reads GLIDPGESVYEAANRELKEEVG. Residues E95 and E99 each contribute to the a divalent metal cation site. S118 is a substrate binding site.

Belongs to the Nudix hydrolase family. As to quaternary structure, homodimer. Mg(2+) is required as a cofactor.

The catalysed reaction is ADP-D-ribose + H2O = D-ribose 5-phosphate + AMP + 2 H(+). Active on adenosine(5')triphospho(5')adenosine (Ap3A), ADP-ribose, NADH, adenosine(5')diphospho(5')adenosine (Ap2A). This is ADP compounds hydrolase NudE (nudE) from Escherichia coli (strain K12).